The primary structure comprises 133 residues: Small ribosomal subunit protein uS8 (133 aa).

This sequence belongs to the universal ribosomal protein uS8 family. Part of the 30S ribosomal subunit. Contacts proteins S5 and S12.

Functionally, one of the primary rRNA binding proteins, it binds directly to 16S rRNA central domain where it helps coordinate assembly of the platform of the 30S subunit. The sequence is that of Small ribosomal subunit protein uS8 from Parasynechococcus marenigrum (strain WH8102).